We begin with the raw amino-acid sequence, 350 residues long: Glycerol-3-phosphate dehydrogenase [NAD(+)], cytoplasmic (350 aa).

Residues 11–16 (GSGNWG), Phe-98, Lys-121, and Ala-155 contribute to the NAD(+) site. Substrate is bound at residue Lys-121. Lys-206 serves as the catalytic Proton acceptor. The NAD(+) site is built by Arg-270 and Gln-299. A substrate-binding site is contributed by 270-271 (RN).

It belongs to the NAD-dependent glycerol-3-phosphate dehydrogenase family. As to quaternary structure, homodimer.

It is found in the cytoplasm. The catalysed reaction is sn-glycerol 3-phosphate + NAD(+) = dihydroxyacetone phosphate + NADH + H(+). Its pathway is phospholipid metabolism; alpha-glycerophosphate cycle. This is Glycerol-3-phosphate dehydrogenase [NAD(+)], cytoplasmic (Gpdh1) from Drosophila ezoana (Fruit fly).